We begin with the raw amino-acid sequence, 153 residues long: Facilitator of iron transport 2 (153 aa).

The signal sequence occupies residues Met1–Ala18. Positions Thr73–Thr98 are disordered. The span at Thr85–Thr98 shows a compositional bias: low complexity. Asn92 carries an N-linked (GlcNAc...) asparagine glycan. A lipid anchor (GPI-anchor amidated glycine) is attached at Gly130. A propeptide spans Ala131–Leu153 (removed in mature form).

In terms of processing, the GPI-anchor is attached to the protein in the endoplasmic reticulum and serves to target the protein to the cell surface. There, the glucosamine-inositol phospholipid moiety is cleaved off and the GPI-modified mannoprotein is covalently attached via its lipidless GPI glycan remnant to the 1,6-beta-glucan of the outer cell wall layer.

Its subcellular location is the secreted. It localises to the cell wall. The protein localises to the membrane. Its function is as follows. Involved in the uptake of non-siderophore and siderophore sources of iron. Has a role in the retention of iron in the cell wall and periplasmic space. The sequence is that of Facilitator of iron transport 2 (FIT2) from Saccharomyces cerevisiae (strain ATCC 204508 / S288c) (Baker's yeast).